The following is a 352-amino-acid chain: MQRYPTKQIKIRDVAIGGDAPIPVQSMTFSKTKDVKGTLAQIQRLYFAGCDIVRCAVLDKEDAKALREIVAKSPLPVVADIHFNHIYAVMVSEYVDAIRINPGNIGSKERIKAVVDACKQRKIPIRIGVNSGSLEKQFEERYGRSVEAMVASAMYNINLLEDFDFTDIKISLKSSDVERTMQAYRTLRPKVPYPFHLGVTEAGTTFHATIKSAIALGGLLLEGIGDTMRVSITGELEEEIKVAKAILKDSGRQREGLNIISCPTCGRLQSDLMKAIKIVEEKTKHIKEPLNVSVMGCVVNAIGEAKGADVAIAFGKESGLIMRRGEVVARLKESELVDRFLAEIDDEIKSRE.

[4Fe-4S] cluster contacts are provided by C262, C265, C297, and E304.

This sequence belongs to the IspG family. The cofactor is [4Fe-4S] cluster.

The catalysed reaction is (2E)-4-hydroxy-3-methylbut-2-enyl diphosphate + oxidized [flavodoxin] + H2O + 2 H(+) = 2-C-methyl-D-erythritol 2,4-cyclic diphosphate + reduced [flavodoxin]. It functions in the pathway isoprenoid biosynthesis; isopentenyl diphosphate biosynthesis via DXP pathway; isopentenyl diphosphate from 1-deoxy-D-xylulose 5-phosphate: step 5/6. In terms of biological role, converts 2C-methyl-D-erythritol 2,4-cyclodiphosphate (ME-2,4cPP) into 1-hydroxy-2-methyl-2-(E)-butenyl 4-diphosphate. The polypeptide is 4-hydroxy-3-methylbut-2-en-1-yl diphosphate synthase (flavodoxin) (Campylobacter curvus (strain 525.92)).